Consider the following 508-residue polypeptide: WD repeat-containing protein JIP5 (508 aa).

6 WD repeats span residues 62 to 105 (EARK…WRTK), 106 to 145 (RHKGSVRALAIDHDGKHVYTIGADNVLKKADTHSGKVVKK), 149 to 188 (DGGSKVTKLVKSATHDFLVMGDEVGTIVVLDSNDLTTKNT), 193 to 233 (HGGD…MKQP), 253 to 294 (DQED…LEDQ), and 345 to 382 (SGLDEVGMLDLDFEYRLVSGGMDKLKIWEVPKEENSDS). Residues 376-508 (KEENSDSDSD…SHGITKFDGL (133 aa)) are disordered. The span at 380–393 (SDSDSDSDINDDSE) shows a compositional bias: acidic residues. Positions 407–419 (ELGSGSESEVESD) are enriched in low complexity. The WD 7 repeat unit spans residues 431-472 (CTGSDLPGDIEGSEGENNSNDDDNHDDREELWKELDQPTSDE). A compositionally biased stretch (acidic residues) spans 441 to 454 (EGSEGENNSNDDDN). A compositionally biased stretch (basic and acidic residues) spans 455–466 (HDDREELWKELD). Residues 478–492 (KRSLKVKDKKNKKFK) are compositionally biased toward basic residues.

It belongs to the WD repeat WDR55 family.

The protein localises to the nucleus. It is found in the nucleolus. In Candida glabrata (strain ATCC 2001 / BCRC 20586 / JCM 3761 / NBRC 0622 / NRRL Y-65 / CBS 138) (Yeast), this protein is WD repeat-containing protein JIP5 (JIP5).